Here is a 133-residue protein sequence, read N- to C-terminus: Ribonuclease VapC28 (133 aa).

A PINc domain is found at 1-124; sequence MIVDTSAIIA…LWKGNDFGHT (124 aa). D4 and D100 together coordinate Mg(2+).

Belongs to the PINc/VapC protein family. It depends on Mg(2+) as a cofactor.

Its function is as follows. Toxic component of a type II toxin-antitoxin (TA) system. An RNase. Upon expression in M.smegmatis inhibits colony formation. Its toxic effect is neutralized by coexpression with cognate antitoxin VapB28. The protein is Ribonuclease VapC28 of Mycobacterium tuberculosis (strain ATCC 25618 / H37Rv).